Consider the following 314-residue polypeptide: Flotillin-like protein FloA (314 aa).

Residues 4–24 form a helical membrane-spanning segment; the sequence is IGPIIIAVLIIIFLIVFFTLV.

This sequence belongs to the flotillin-like FloA family. As to quaternary structure, homooligomerizes.

It localises to the cell membrane. It is found in the membrane raft. Its function is as follows. Found in functional membrane microdomains (FMM) that may be equivalent to eukaryotic membrane rafts. FMMs are highly dynamic and increase in number as cells age. Flotillins are thought to be important factors in membrane fluidity. In Listeria innocua serovar 6a (strain ATCC BAA-680 / CLIP 11262), this protein is Flotillin-like protein FloA.